Here is a 684-residue protein sequence, read N- to C-terminus: 1,4-alpha-glucan-branching enzyme (684 aa).

2 residues coordinate (1,4-alpha-D-glucosyl)n: Trp88 and Lys123. Asp340 acts as the Nucleophile in catalysis. Glu395 functions as the Proton donor in the catalytic mechanism.

This sequence belongs to the glycosyl hydrolase 13 family. GlgB subfamily.

The protein localises to the cytoplasm. It carries out the reaction Transfers a segment of a (1-&gt;4)-alpha-D-glucan chain to a primary hydroxy group in a similar glucan chain.. The protein operates within glycan biosynthesis; glycogen biosynthesis. Functionally, glycogen-branching enzyme participates in the glycogen biosynthetic process along with glycogenin and glycogen synthase. Generates alpha-1,6-glucosidic branches from alpha-1,4-linked glucose chains, to increase solubility of the glycogen polymer. The polypeptide is 1,4-alpha-glucan-branching enzyme (be1) (Emericella nidulans (strain FGSC A4 / ATCC 38163 / CBS 112.46 / NRRL 194 / M139) (Aspergillus nidulans)).